Here is a 159-residue protein sequence, read N- to C-terminus: NAD(P)H-quinone oxidoreductase subunit N (159 aa).

This sequence belongs to the complex I NdhN subunit family. In terms of assembly, NDH-1 can be composed of about 15 different subunits; different subcomplexes with different compositions have been identified which probably have different functions.

It localises to the cell inner membrane. It carries out the reaction a plastoquinone + NADH + (n+1) H(+)(in) = a plastoquinol + NAD(+) + n H(+)(out). The catalysed reaction is a plastoquinone + NADPH + (n+1) H(+)(in) = a plastoquinol + NADP(+) + n H(+)(out). NDH-1 shuttles electrons from an unknown electron donor, via FMN and iron-sulfur (Fe-S) centers, to quinones in the respiratory and/or the photosynthetic chain. The immediate electron acceptor for the enzyme in this species is believed to be plastoquinone. Couples the redox reaction to proton translocation, and thus conserves the redox energy in a proton gradient. Cyanobacterial NDH-1 also plays a role in inorganic carbon-concentration. The polypeptide is NAD(P)H-quinone oxidoreductase subunit N (Gloeobacter violaceus (strain ATCC 29082 / PCC 7421)).